The following is a 1056-amino-acid chain: Potassium transporter TRK1 (1056 aa).

Residues Met1–Asn46 lie on the Cytoplasmic side of the membrane. A helical transmembrane segment spans residues Phe47–Tyr67. The Extracellular segment spans residues Pro68–Ala73. An intramembrane segment occupies Tyr74–Leu90. Residues Asn91–Ser99 lie on the Extracellular side of the membrane. Residues Leu100–Leu122 traverse the membrane as a helical segment. The Cytoplasmic portion of the chain corresponds to Leu123–Lys622. Disordered stretches follow at residues Arg180–Glu276, Lys290–Asp350, and Pro404–Asn571. Over residues Ser186 to Thr203 the composition is skewed to low complexity. Positions Glu236–Arg245 are enriched in basic and acidic residues. Polar residues predominate over residues Pro335–Asn344. The segment covering Thr412–Ser423 has biased composition (low complexity). Composition is skewed to acidic residues over residues Asp428–Ser449 and Tyr469–Glu487. The segment covering Arg521–Ser533 has biased composition (polar residues). The segment covering Lys537–Arg549 has biased composition (basic residues). Over residues Asn553 to Ser563 the composition is skewed to polar residues. A helical transmembrane segment spans residues Leu623 to Trp646. Residues Ile647–Ala665 are Extracellular-facing. An intramembrane segment occupies Trp666–Thr682. Residues Leu683–Gln693 lie on the Extracellular side of the membrane. A helical transmembrane segment spans residues Asn694–Thr710. Topologically, residues Gly711–Ser754 are cytoplasmic. A helical membrane pass occupies residues Val755 to Leu778. The Extracellular portion of the chain corresponds to Asp779–Arg793. Residues Val794–Ser810 lie within the membrane without spanning it. Over Val811–Leu817 the chain is Extracellular. A helical membrane pass occupies residues His818–Arg841. Over Arg842–His874 the chain is Cytoplasmic. Residues Leu875 to Ala896 traverse the membrane as a helical segment. The Extracellular portion of the chain corresponds to Glu897–Ser909. Residues Ile910–Met928 lie within the membrane without spanning it. Topologically, residues Gly929–Asn942 are extracellular. A helical transmembrane segment spans residues Val943–Ile965. The Cytoplasmic portion of the chain corresponds to Asp966 to Val1056.

Belongs to the TrkH potassium transport family.

Its subcellular location is the cell membrane. It catalyses the reaction K(+)(in) = K(+)(out). It carries out the reaction chloride(in) = chloride(out). With respect to regulation, TRK1-mediated chloride conductance is blocked by 4,4'-diisothiocyanatostilbene-2,2'-disulfonic acid. In terms of biological role, potassium transporter that mediates K(+) influx, as well as Cl(-) efflux as a secondary function. TRK1 is the major K(+) uptake transporter that regulates membrane potential and intracellular pH. The TRK1-mediated Cl(-) efflux should serve as a Cl(-) detoxification route and may play a role in sustaining C.albicans on mammalian epithelial surfaces, or in physiological saline solutions such as saliva. Its function is as follows. Mediates candidacidal activities of cysteine-free peptides, but not of defensins. The hallmark of salivary gland-secreted histatin-5 (Hst 5) killing of C.albicans is the rapid efflux of cellular ATP and other small nucleotides and ions from the cell as well as concurrent intracellular uptake of propidium iodide (PI). TRK1 is the channel for Hst 5-induced killing and histatin-5 may directly or indirectly alter TRK1 function, allowing the efflux of larger anions, including ATP, and the influx of small cationic dyes, such as PI. This is Potassium transporter TRK1 from Candida albicans (strain SC5314 / ATCC MYA-2876) (Yeast).